A 358-amino-acid chain; its full sequence is Magnesium-protoporphyrin IX monomethyl ester [oxidative] cyclase 1 (358 aa).

This sequence belongs to the AcsF family. The cofactor is Fe cation.

It carries out the reaction Mg-protoporphyrin IX 13-monomethyl ester + 3 NADPH + 3 O2 + 2 H(+) = 3,8-divinyl protochlorophyllide a + 3 NADP(+) + 5 H2O. It functions in the pathway porphyrin-containing compound metabolism; chlorophyll biosynthesis (light-independent). Functionally, catalyzes the formation of the isocyclic ring in chlorophyll biosynthesis. Mediates the cyclase reaction, which results in the formation of divinylprotochlorophyllide (Pchlide) characteristic of all chlorophylls from magnesium-protoporphyrin IX 13-monomethyl ester (MgPMME). This chain is Magnesium-protoporphyrin IX monomethyl ester [oxidative] cyclase 1, found in Synechocystis sp. (strain ATCC 27184 / PCC 6803 / Kazusa).